The following is a 585-amino-acid chain: Glycerol-3-phosphate acyltransferase 1 (585 aa).

3 consecutive transmembrane segments (helical) span residues 126–146 (FFPYFMLVAFEGGSIIRAILL), 334–354 (TPLATLAMFIWLPIGFLLAVF), and 356–376 (ISVGVFLPYHVANFLASMSGV). The short motif at 403-408 (HRTLLD) is the HXXXXD motif element.

It belongs to the GPAT/DAPAT family. In terms of tissue distribution, highly expressed in developing siliques and flower buds. Weakly or not expressed in roots, seedlings and leaves.

It is found in the membrane. The protein resides in the mitochondrion. The catalysed reaction is sn-glycerol 3-phosphate + an acyl-CoA = a 1-acyl-sn-glycero-3-phosphate + CoA. The protein operates within phospholipid metabolism; CDP-diacylglycerol biosynthesis; CDP-diacylglycerol from sn-glycerol 3-phosphate: step 1/3. Its function is as follows. Esterifies acyl-group from acyl-ACP to the sn-1 position of glycerol-3-phosphate, an essential step in glycerolipid biosynthesis. Involved in pollen development, by being required for tapetum differentiation and male fertility. In addition to the sporophytic effect, it also exerts a gametophytic effect on pollen performance. The chain is Glycerol-3-phosphate acyltransferase 1 (GPAT1) from Arabidopsis thaliana (Mouse-ear cress).